The sequence spans 934 residues: UPF0182 protein sync_1321 (934 aa).

Transmembrane regions (helical) follow at residues 2–22, 45–65, 86–106, 129–149, 165–185, 208–228, 251–271, 300–320, and 327–347; these read AKIIWTIGRFGLLLIPLIVII, LLLQLGGALFAFLFVGSCALW, GYRYGFCLLACLLVLLSVLAI, FSTGWPLLSLSILMLTLIMFG, VCICLIVARSWGLWSLAFSIP, IAFGLELVLLQLSLTLSTALW, HGLRPGFALVLMSFSGLMWLS, LGSIALLVLAFVVLPSPFSSV, and LILAFIAIASFGLEMVLFPLM.

It belongs to the UPF0182 family.

Its subcellular location is the cell membrane. In Synechococcus sp. (strain CC9311), this protein is UPF0182 protein sync_1321.